The following is a 331-amino-acid chain: Aflatoxin B1 aldehyde reductase member 4 (331 aa).

An NADP(+)-binding site is contributed by aspartate 44. The Proton donor role is filled by tyrosine 49. Position 85 is a phosphoserine (serine 85). Histidine 113 provides a ligand contact to substrate. NADP(+) contacts are provided by residues 143 to 144 (SN), glutamine 169, 198 to 208 (NPLAGGLLTGK), and arginine 222. A substrate-binding site is contributed by tyrosine 232. 290–298 (SSLEQLEQN) is a binding site for NADP(+).

This sequence belongs to the aldo/keto reductase family. Aldo/keto reductase 2 subfamily. In terms of tissue distribution, mainly expressed in uterus.

Can reduce the dialdehyde protein-binding form of aflatoxin B1 (AFB1) to the non-binding AFB1 dialcohol. May be involved in protection of liver against the toxic and carcinogenic effects of AFB1, a potent hepatocarcinogen. The protein is Aflatoxin B1 aldehyde reductase member 4 (AKR7L) of Homo sapiens (Human).